Here is a 352-residue protein sequence, read N- to C-terminus: MASREDELRNCVVCGDQATGYHFNALTCEGCKGFFRRTVSKSIGPTCPFAGSCEVSKTQRRHCPACRLQKCLDAGMRKDMILSAEALALRRAKQAQRRAQQTPVQLSKEQEELIRTLLGAHTRHMGTMFEQFVQFRPPAHLFIHHQPLPTLAPVLPLVTHFADINTFMVLQVIKFTKDLPVFRSLPIEDQISLLKGAAVEICHIVLNTTFCLQTQNFLCGPLRYTIEDGARVSPTVGFQVEFLELLFHFHGTLRKLQLQEPEYVLLAAMALFSPDRPGVTQRDEIDQLQEEMALTLQSYIKGQQRRPRDRFLYAKLLGLLAELRSINEAYGYQIQHIQGLSAMMPLLQEICS.

Residues 8-83 constitute a DNA-binding region (nuclear receptor); it reads LRNCVVCGDQ…AGMRKDMILS (76 aa). Residues 11–31 form an NR C4-type zinc finger; that stretch reads CVVCGDQATGYHFNALTCEGC. The residue at position 38 (Thr38) is a Phosphothreonine; by PKC. An NR C4-type zinc finger spans residues 47 to 71; sequence CPFAGSCEVSKTQRRHCPACRLQKC. The 244-residue stretch at 109–352 folds into the NR LBD domain; that stretch reads EQEELIRTLL…MMPLLQEICS (244 aa).

It belongs to the nuclear hormone receptor family. NR1 subfamily. In terms of assembly, interacts with ECT2. Heterodimer of NR1I3 and RXR. Interacts with PSMC4. Directly interacts with DNAJC7. The DNAJC7-NR1I3 complex may also include HSP90. Interacts with CRY1. Interacts with CRY2 in a ligand-dependent manner. Post-translationally, phosphorylated at Thr-38 by PKC, dephosphorylation of Thr-38 is required for nuclear translocation and activation. In terms of tissue distribution, predominantly expressed in liver.

Its subcellular location is the nucleus. The protein resides in the cytoplasm. It is found in the cytoskeleton. Functionally, binds and transactivates the retinoic acid response elements that control expression of the retinoic acid receptor beta 2 and alcohol dehydrogenase 3 genes. Transactivates both the phenobarbital responsive element module of the human CYP2B6 gene and the CYP3A4 xenobiotic response element. This is Nuclear receptor subfamily 1 group I member 3 (NR1I3) from Homo sapiens (Human).